A 1322-amino-acid polypeptide reads, in one-letter code: MSLAHYCLLLAIVTLLGLTNVVSATTAACLPANSRKNGMNVNFYQYSLRDSSTYSNAAYMAYGYASKTKLGSVGGQTDISIDYNIPCVSSSGTFPCPQEDLYGNWGCKGIGACSNNPIIAYWSTDLFGFYTTPTNVTLEMTGYFLPPQTGSYTFKFATVDDSAILSVGGSIAFECCAQEQPPITSTNFTINGIKPWNGSPPDNITGTVYMYAGFYYPMKIVYSNAVAWGTLPISVTLPDGTTVSDDFEGYVYTFDNNLSQPNCTIPDPSNYTVSTTITTTEPWTGTFTSTSTEMTTVTGTNGVPTDETVIVIRTPTTASTIITTTEPWNSTFTSTSTELTTVTGTNGVRTDETIIVIRTPTTATTAITTTEPWNSTFTSTSTELTTVTGTNGLPTDETIIVIRTPTTATTAMTTTQPWNDTFTSTSTELTTVTGTNGLPTDETIIVIRTPTTATTAMTTTQPWNDTFTSTSTELTTVTGTNGLPTDETIIVIRTPTTATTAMTTTQPWNDTFTSTSTEITTVTGTNGLPTDETIIVIRTPTTATTAMTTTQPWNDTFTSTSTEMTTVTGTNGLPTDETIIVIRTPTTATTAITTTEPWNSTFTSTSTEMTTVTGTNGLPTDETIIVIRTPTTATTAITTTQPWNDTFTSTSTEMTTVTGTNGLPTDETIIVIRTPTTATTAMTTTQPWNDTFTSTSTEITTVTGTNGLPTDETIIVIRTPTTATTAMTTTQPWNDTFTSTSTEMTTVTGTNGVPTDETVIVIRTPTSEGLISTTTEPWTGTFTSTSTEMTTVTGTNGQPTDETVIVIRTPTSEGLVTTTTEPWTGTFTSTSTEMTTITGTNGQPTDETVIIVKTPTTAISSSLSSSSGQITSFITSARPIITPFYPSNGTSVISSSVISSSDTSSLVISSSVTSSLVTSSPVISSSFISSPVISSTTTSASILSESSKSSVIPTSSSTSGSSESETGSASSASSSSSISSESPKSTYSSSSLPPVTSATTSQEITSSLPPVTTTKTSEQTTLVTVTSCESHVCTESISSAIVSTATVTVSGATTEYTTWCPISTTEITKQTTETTKQTKGTTEQTTETTKQTTVVTISSCESDVCSKTASPAIVSTSTATINGVTTEYTTWCPISTTESKQQTTLVTVTSCGSGVCSETTSPAIVSTATATVNDVVTVYSTWRPQTTNEQSVSSKMNSATSETTTNTGAAETTTSTGAAETKTVVTSSISRFNHAETQTASATDVIGHSSSVVSVSETGNTKSLTSSGLSTMSQQPRSTPASSMVGSSTASLEISTYAGSANSLLAGSGLSVFIASLLLAII.

The N-terminal stretch at 1–24 is a signal peptide; it reads MSLAHYCLLLAIVTLLGLTNVVSA. A PA14 domain is found at 74–249; that stretch reads GGQTDISIDY…GTTVSDDFEG (176 aa). Residues Asn135, Asn187, Asn203, Asn257, Asn262, and Asn270 are each glycosylated (N-linked (GlcNAc...) asparagine). The sugar recognition stretch occupies residues 197–240; it reads NGSPPDNITGTVYMYAGFYYPMKIVYSNAVAWGTLPISVTLPDG. A run of 13 repeats spans residues 278–322, 323–367, 368–412, 413–457, 458–502, 503–547, 548–592, 593–637, 638–682, 683–727, 728–772, 773–817, and 818–862. The 13 X 45 AA approximate tandem repeats, Thr-rich stretch occupies residues 278–862; that stretch reads TTTEPWTGTF…KTPTTAISSS (585 aa). Residue Asn329 is glycosylated (N-linked (GlcNAc...) asparagine). Asn419, Asn464, Asn509, Asn554, Asn599, Asn644, Asn689, and Asn734 each carry an N-linked (GlcNAc...) asparagine glycan. Disordered regions lie at residues 770–799 and 816–843; these read LISTTTEPWTGTFTSTSTEMTTVTGTNGQP and VTTTTEPWTGTFTSTSTEMTTITGTNGQ. 2 stretches are compositionally biased toward low complexity: residues 773-795 and 817-840; these read TTTEPWTGTFTSTSTEMTTVTGT and TTTTEPWTGTFTSTSTEMTTITGT. Asn888 carries N-linked (GlcNAc...) asparagine glycosylation. A run of 3 repeats spans residues 892 to 906, 907 to 921, and 922 to 936. The 3 X 15 AA approximate repeats, Ser-rich stretch occupies residues 892–936; the sequence is VISSSVISSSDTSSLVISSSVTSSLVTSSPVISSSFISSPVISST. Over residues 950–1001 the composition is skewed to low complexity; the sequence is SVIPTSSSTSGSSESETGSASSASSSSSISSESPKSTYSSSSLPPVTSATTS. The disordered stretch occupies residues 950–1018; sequence SVIPTSSSTS…PPVTTTKTSE (69 aa). The segment covering 1002–1018 has biased composition (polar residues); that stretch reads QEITSSLPPVTTTKTSE. Repeat copies occupy residues 1013-1063, 1085-1135, and 1136-1186. A 3 X 51 AA approximate repeats, Thr-rich region spans residues 1013-1186; the sequence is TTKTSEQTTL…TVYSTWRPQT (174 aa). The span at 1186-1196 shows a compositional bias: polar residues; sequence TTNEQSVSSKM. 2 disordered regions span residues 1186-1221 and 1256-1284; these read TTNEQSVSSKMNSATSETTTNTGAAETTTSTGAAET and SETGNTKSLTSSGLSTMSQQPRSTPASSM. Low complexity predominate over residues 1197–1221; that stretch reads NSATSETTTNTGAAETTTSTGAAET. A compositionally biased stretch (polar residues) spans 1257–1284; that stretch reads ETGNTKSLTSSGLSTMSQQPRSTPASSM. Gly1299 is lipidated: GPI-anchor amidated glycine. Positions 1300-1322 are cleaved as a propeptide — removed in mature form; that stretch reads SANSLLAGSGLSVFIASLLLAII.

The protein belongs to the flocculin family. In terms of processing, the GPI-anchor is attached to the protein in the endoplasmic reticulum and serves to target the protein to the cell surface. There, the glucosamine-inositol phospholipid moiety is cleaved off and the GPI-modified mannoprotein is covalently attached via its lipidless GPI glycan remnant to the 1,6-beta-glucan of the outer cell wall layer.

Its subcellular location is the secreted. It is found in the cell wall. The protein resides in the membrane. Its function is as follows. Cell wall protein that participates directly in adhesive cell-cell interactions during yeast flocculation, a reversible, asexual and Ca(2+)-dependent process in which cells adhere to form aggregates (flocs) consisting of thousands of cells. The lectin-like protein sticks out of the cell wall of flocculent cells and selectively binds mannose residues in the cell walls of adjacent cells. This is Flocculation protein FLO9 (FLO9) from Saccharomyces cerevisiae (strain ATCC 204508 / S288c) (Baker's yeast).